Reading from the N-terminus, the 211-residue chain is Protein-L-isoaspartate O-methyltransferase (211 aa).

Serine 60 is a catalytic residue.

The protein belongs to the methyltransferase superfamily. L-isoaspartyl/D-aspartyl protein methyltransferase family.

It localises to the cytoplasm. The enzyme catalyses [protein]-L-isoaspartate + S-adenosyl-L-methionine = [protein]-L-isoaspartate alpha-methyl ester + S-adenosyl-L-homocysteine. Its function is as follows. Catalyzes the methyl esterification of L-isoaspartyl residues in peptides and proteins that result from spontaneous decomposition of normal L-aspartyl and L-asparaginyl residues. It plays a role in the repair and/or degradation of damaged proteins. In Pseudomonas syringae pv. tomato (strain ATCC BAA-871 / DC3000), this protein is Protein-L-isoaspartate O-methyltransferase.